The sequence spans 805 residues: Muscarinic acetylcholine receptor DM1 (805 aa).

The Extracellular segment spans residues 1–100; it reads MEPVMSLALA…GFETKGPRYS (100 aa). The segment covering 27–43 has biased composition (low complexity); sequence TSTTTTTTTTTSTTTTT. The disordered stretch occupies residues 27–47; it reads TSTTTTTTTTTSTTTTTASPA. N65, N84, and N87 each carry an N-linked (GlcNAc...) asparagine glycan. A helical membrane pass occupies residues 101-121; the sequence is LASMVVMGFVAAILSTVTVAG. Over 122–141 the chain is Cytoplasmic; that stretch reads NVMVMISFKIDKQLQTISNY. The helical transmembrane segment at 142–162 threads the bilayer; the sequence is FLFSLAIADFAIGAISMPLFA. The Extracellular portion of the chain corresponds to 163–177; sequence VTTILGYWPLGPIVC. Residues 178-198 form a helical membrane-spanning segment; the sequence is DTWLALDYLASNASVLNLLII. Residues 199–220 are Cytoplasmic-facing; the sequence is SFDRYFSVTRPLTYRAKRTTNR. Residues 221–241 form a helical membrane-spanning segment; sequence AAVMIGAAWGISLLLWPPWIY. Over 242–266 the chain is Extracellular; the sequence is SWPYIEGKRTVPKDECYIQFIETNQ. Residues 267–287 traverse the membrane as a helical segment; the sequence is YITFGTALAAFYFPVTIMCFL. At 288–718 the chain is on the cytoplasmic side; sequence YWRIWRETKK…KRQESKAAKT (431 aa). Disordered stretches follow at residues 302–322, 340–359, and 507–530; these read LPNLQAGKKDSSKRSNSSDEN, GNDHDTWRRPRSESSPDAES, and GNGNGAINNNNNASHNGNGAVNGN. Composition is skewed to basic and acidic residues over residues 308–318 and 341–353; these read GKKDSSKRSNS and NDHDTWRRPRSES. Low complexity predominate over residues 507–525; the sequence is GNGNGAINNNNNASHNGNG. The helical transmembrane segment at 719-739 threads the bilayer; that stretch reads LSAILLSFIITWTPYNILVLI. Residues 740 to 752 are Extracellular-facing; that stretch reads KPLTTCSDCIPTE. The chain crosses the membrane as a helical span at residues 753–773; sequence LWDFFYALCYINSTINPMCYA. Residues 774–805 lie on the Cytoplasmic side of the membrane; it reads LCNATFRRTYVRILTCKWHTRNREGMVRGVYN.

The protein belongs to the G-protein coupled receptor 1 family. Muscarinic acetylcholine receptor subfamily. As to expression, intense staining in the glomeruli of the antennal lobes, the region of the nervous system containing terminals of antennal olfactory sensory neurons and mechanosensory neurons. Also a discrete group of neurosecretory cells in the pars intercerebralis of the brain.

It localises to the cell membrane. Its subcellular location is the postsynaptic cell membrane. Functionally, the muscarinic acetylcholine receptor mediates various cellular responses, including inhibition of adenylate cyclase, breakdown of phosphoinositides and modulation of potassium channels through the action of G proteins. Primary transducing effect is Pi turnover. May have a role in the processing of olfactory and mechanosensory signals; regulation of neurosecretion. In Drosophila melanogaster (Fruit fly), this protein is Muscarinic acetylcholine receptor DM1 (mAChR-A).